We begin with the raw amino-acid sequence, 245 residues long: Aquaporin SIP1-1 (245 aa).

2 helical membrane-spanning segments follow: residues 14 to 34 (AVVT…TAAV) and 55 to 75 (LLSV…GASF). Positions 76–78 (NPT) match the NPA 1 motif. The next 3 membrane-spanning stretches (helical) occupy residues 100–120 (FPAQ…LMPA), 138–158 (GALA…WVIV), and 164–184 (VILK…AGAE). An NPA 2 motif is present at residues 191 to 193 (NPA). Residues 213 to 233 (VYWICPFIGAMLAGWIFRVVF) form a helical membrane-spanning segment.

The protein belongs to the MIP/aquaporin (TC 1.A.8) family. SIP (TC 1.A.8.10) subfamily.

The protein localises to the membrane. Functionally, aquaporins facilitate the transport of water and small neutral solutes across cell membranes. The sequence is that of Aquaporin SIP1-1 (SIP1-1) from Zea mays (Maize).